The primary structure comprises 419 residues: uncharacterized protein (419 aa).

12 helical membrane-spanning segments follow: residues arginine 15–leucine 35, alanine 36–valine 56, tyrosine 77–glutamine 99, valine 104–leucine 126, methionine 140–leucine 160, isoleucine 166–leucine 186, phenylalanine 213–alanine 233, glutamine 246–leucine 266, leucine 282–glycine 302, valine 309–phenylalanine 329, phenylalanine 351–methionine 371, and leucine 377–glycine 397.

Belongs to the major facilitator superfamily.

The protein localises to the cell membrane. This is an uncharacterized protein from Mycobacterium tuberculosis (strain CDC 1551 / Oshkosh).